A 475-amino-acid chain; its full sequence is Ribulose bisphosphate carboxylase large chain (475 aa).

A propeptide spanning residues 1–2 (MA) is cleaved from the precursor. Pro3 carries the post-translational modification N-acetylproline. N6,N6,N6-trimethyllysine is present on Lys14. The substrate site is built by Asn123 and Thr173. Catalysis depends on Lys175, which acts as the Proton acceptor. A substrate-binding site is contributed by Lys177. Lys201, Asp203, and Glu204 together coordinate Mg(2+). Lys201 carries the post-translational modification N6-carboxylysine. His294 serves as the catalytic Proton acceptor. 3 residues coordinate substrate: Arg295, His327, and Ser379.

The protein belongs to the RuBisCO large chain family. Type I subfamily. In terms of assembly, heterohexadecamer of 8 large chains and 8 small chains; disulfide-linked. The disulfide link is formed within the large subunit homodimers. It depends on Mg(2+) as a cofactor. Post-translationally, the disulfide bond which can form in the large chain dimeric partners within the hexadecamer appears to be associated with oxidative stress and protein turnover.

Its subcellular location is the plastid. It is found in the chloroplast. It catalyses the reaction 2 (2R)-3-phosphoglycerate + 2 H(+) = D-ribulose 1,5-bisphosphate + CO2 + H2O. It carries out the reaction D-ribulose 1,5-bisphosphate + O2 = 2-phosphoglycolate + (2R)-3-phosphoglycerate + 2 H(+). RuBisCO catalyzes two reactions: the carboxylation of D-ribulose 1,5-bisphosphate, the primary event in carbon dioxide fixation, as well as the oxidative fragmentation of the pentose substrate in the photorespiration process. Both reactions occur simultaneously and in competition at the same active site. This Bryopsis maxima (Green alga) protein is Ribulose bisphosphate carboxylase large chain.